An 83-amino-acid polypeptide reads, in one-letter code: Scyreptin (83 aa).

Cationic antimicrobial peptide that exhibits a potent and broad-spectrum antimicrobial activity against both bacteria and fungi, as well as against the multidrug-resistant bacteria P.aeruginosa. Exhibits rapid bactericidal kinetic. Acts by destroying the integrity of bacterial membranes, leading to bacterial death. Also exhibits potent anti-biofilm activity against P.aeruginosa. Shows high thermal stability and ion tolerance, as it maintains antibacterial activity even when heated to 100 degrees Celsius for 30 minutes and in presence of high levels of NaCl, CaCl(2) and MgCl(2). Does not show cytotoxicity and hemolytic activity. In a mouse model of burn infection, exhibits a remarkably reduction in the bacterial load caused by multidrug-resistant P.aeruginosa at the site of infection, and promotes wound healing. The protein is Scyreptin of Scylla paramamosain (Mud crab).